Here is a 668-residue protein sequence, read N- to C-terminus: Transketolase 1 (668 aa).

His26 is a substrate binding site. Residues His66 and 114–116 each bind thiamine diphosphate; that span reads GPL. Residue Asp155 coordinates Mg(2+). Thiamine diphosphate-binding residues include Gly156 and Asn185. The Mg(2+) site is built by Asn185 and Ile187. Substrate contacts are provided by His261, Arg358, and Ser385. Position 261 (His261) interacts with thiamine diphosphate. Glu413 functions as the Proton donor in the catalytic mechanism. Thiamine diphosphate is bound at residue Phe439. Substrate is bound by residues His463, Asp471, and Arg522.

It belongs to the transketolase family. Homodimer. It depends on Mg(2+) as a cofactor. Ca(2+) serves as cofactor. The cofactor is Mn(2+). Requires Co(2+) as cofactor. Thiamine diphosphate is required as a cofactor.

The enzyme catalyses D-sedoheptulose 7-phosphate + D-glyceraldehyde 3-phosphate = aldehydo-D-ribose 5-phosphate + D-xylulose 5-phosphate. Catalyzes the transfer of a two-carbon ketol group from a ketose donor to an aldose acceptor, via a covalent intermediate with the cofactor thiamine pyrophosphate. The protein is Transketolase 1 (tktA) of Pasteurella multocida (strain Pm70).